A 635-amino-acid polypeptide reads, in one-letter code: Threonine--tRNA ligase (635 aa).

Positions 1–61 (MIQITLPDAS…EKDSALSIIT (61 aa)) constitute a TGS domain. Positions 242–533 (DHRKLGKELD…LIEEHAGALP (292 aa)) are catalytic. 3 residues coordinate Zn(2+): C333, H384, and H510.

This sequence belongs to the class-II aminoacyl-tRNA synthetase family. Homodimer. Zn(2+) serves as cofactor.

It is found in the cytoplasm. The enzyme catalyses tRNA(Thr) + L-threonine + ATP = L-threonyl-tRNA(Thr) + AMP + diphosphate + H(+). Catalyzes the attachment of threonine to tRNA(Thr) in a two-step reaction: L-threonine is first activated by ATP to form Thr-AMP and then transferred to the acceptor end of tRNA(Thr). Also edits incorrectly charged L-seryl-tRNA(Thr). The sequence is that of Threonine--tRNA ligase from Polaromonas sp. (strain JS666 / ATCC BAA-500).